Here is a 371-residue protein sequence, read N- to C-terminus: Spermatogenic leucine zipper protein 1 (371 aa).

Coiled-coil stretches lie at residues 96 to 148 and 177 to 289; these read EVSE…TVQD and FPHI…QKEE. Ser-98 carries the phosphoserine modification. Residues 110-120 form a helix-loop-helix motif region; that stretch reads INKELVKKLLA. A basic motif region spans residues 121-188; sequence SLDLGKKENA…HIQEENIRLR (68 aa). Ser-202 bears the Phosphoserine mark. The segment covering 223-240 has biased composition (polar residues); it reads KTLKNNGTHSPTQTNNES. The tract at residues 223–246 is disordered; the sequence is KTLKNNGTHSPTQTNNESAKQELE. Residues 245–266 form a leucine-zipper region; sequence LEEQVKRLKEDTYSLHLIATLL.

Phosphorylated by MAPK1/ERK2 and MAPK3/ERK1.

The protein resides in the cytoplasm. Its subcellular location is the nucleus. Transcription factor that binds to the DNA sequence 5'-CANNTG-3'(E box) and the G-box motif. May play an important role in the regulation of cell proliferation and differentiation during spermatogenesis. The chain is Spermatogenic leucine zipper protein 1 (SPZ1) from Bos taurus (Bovine).